The primary structure comprises 145 residues: Cytochrome c550 (145 aa).

Residues 1–24 (MNKNNVLRGLLVLAGLSLSSLALA) form the signal peptide. The 83-residue stretch at 60 to 142 (LAVEIGASAY…AIRSYLESVH (83 aa)) folds into the Cytochrome c domain. Cys-73, Cys-76, His-77, and Met-119 together coordinate heme c.

As to quaternary structure, monomer. Interacts with the quinoprotein ethanol dehydrogenase (QEDH) ExaA. Binds 1 heme group per subunit.

It localises to the periplasm. It functions in the pathway alcohol metabolism; ethanol degradation; acetate from ethanol. In terms of biological role, is an essential component of the ethanol oxidation system that allows P.aeruginosa to grow on ethanol as the sole carbon and energy source. Is the direct electron acceptor of the quinoprotein ethanol dehydrogenase (QEDH). The chain is Cytochrome c550 from Pseudomonas aeruginosa (strain ATCC 15692 / DSM 22644 / CIP 104116 / JCM 14847 / LMG 12228 / 1C / PRS 101 / PAO1).